The following is a 226-amino-acid chain: PKHD-type hydroxylase HNE_2117 (226 aa).

The Fe2OG dioxygenase domain occupies 78-178 (TVLTPRFNRY…RLASFLWTQS (101 aa)). Fe cation-binding residues include H96, D98, and H159. Residue R169 coordinates 2-oxoglutarate.

Fe(2+) serves as cofactor. Requires L-ascorbate as cofactor.

This is PKHD-type hydroxylase HNE_2117 from Hyphomonas neptunium (strain ATCC 15444).